A 298-amino-acid polypeptide reads, in one-letter code: Foldase protein PrsA 1 (298 aa).

The signal sequence occupies residues 1–23; it reads MNKTWKKAATVLAFAGIALSATA. A lipid anchor (N-palmitoyl cysteine) is attached at Cys-24. A lipid anchor (S-diacylglycerol cysteine) is attached at Cys-24. In terms of domain architecture, PpiC spans 141-234; it reads QPEVTVQHIL…YGYHVIKMIK (94 aa).

The protein belongs to the PrsA family.

The protein resides in the cell membrane. It catalyses the reaction [protein]-peptidylproline (omega=180) = [protein]-peptidylproline (omega=0). Functionally, plays a major role in protein secretion by helping the post-translocational extracellular folding of several secreted proteins. The sequence is that of Foldase protein PrsA 1 (prsA1) from Lactobacillus johnsonii (strain CNCM I-12250 / La1 / NCC 533).